Consider the following 527-residue polypeptide: Catalase (527 aa).

Residues 1–22 (MADSRDPASDQMKHWKEERAAQ) show a composition bias toward basic and acidic residues. Residues 1–32 (MADSRDPASDQMKHWKEERAAQKPDVLTTAGG) form a disordered region. Ala-2 is subject to N-acetylalanine. Ser-9 bears the Phosphoserine mark. Residue Lys-13 is modified to N6-succinyllysine. Catalysis depends on residues His-75 and Asn-148. His-194, Ser-201, Arg-203, and Asn-213 together coordinate NADP(+). Lys-221 carries the post-translational modification N6-succinyllysine. Lys-233 carries the N6-acetyllysine modification. Lys-237, Trp-303, His-305, and Lys-306 together coordinate NADP(+). Residue Lys-306 is modified to N6-acetyllysine; alternate. An N6-succinyllysine; alternate modification is found at Lys-306. Tyr-358 is a heme binding site. A Phosphoserine modification is found at Ser-434. Lys-480 bears the N6-acetyllysine; alternate mark. Lys-480 carries the N6-succinyllysine; alternate modification. An N6-acetyllysine modification is found at Lys-499. The residue at position 511 (Thr-511) is a Phosphothreonine. The residue at position 517 (Ser-517) is a Phosphoserine. Lys-522 bears the N6-succinyllysine mark. Positions 524-527 (KANL) match the Microbody targeting signal; atypical motif.

Belongs to the catalase family. As to quaternary structure, homotetramer. Interacts (via microbody targeting signal) with PEX5, monomeric form interacts with PEX5, leading to its translocation into peroxisomes. Heme serves as cofactor. Requires NADP(+) as cofactor.

Its subcellular location is the peroxisome matrix. The enzyme catalyses 2 H2O2 = O2 + 2 H2O. Catalyzes the degradation of hydrogen peroxide (H(2)O(2)) generated by peroxisomal oxidases to water and oxygen, thereby protecting cells from the toxic effects of hydrogen peroxide. Promotes growth of cells including T-cells, B-cells, myeloid leukemia cells, melanoma cells, mastocytoma cells and normal and transformed fibroblast cells. The sequence is that of Catalase (CAT) from Cavia porcellus (Guinea pig).